The sequence spans 164 residues: Anterior gradient protein 2-B (164 aa).

The first 20 residues, 1 to 20, serve as a signal peptide directing secretion; sequence MESVLKSLFVLLVATSFTLA. 2 short sequence motifs (homodimer stabilization; interchain) span residues 34 to 43 and 49 to 56; these read SRGWGDNLEW and EGLYKAKA.

The protein belongs to the AGR family. Monomer and homodimer.

Its subcellular location is the secreted. The protein resides in the endoplasmic reticulum. This chain is Anterior gradient protein 2-B (agr2-b), found in Xenopus laevis (African clawed frog).